The following is a 384-amino-acid chain: Farnesyl pyrophosphate synthase 1, mitochondrial (384 aa).

Isopentenyl diphosphate is bound by residues Lys89, Arg92, and Gln128. Mg(2+) contacts are provided by Asp135 and Asp139. Arg144 serves as a coordination point for dimethylallyl diphosphate. Residue Arg145 coordinates isopentenyl diphosphate. Positions 232, 233, 271, 288, and 297 each coordinate dimethylallyl diphosphate.

This sequence belongs to the FPP/GGPP synthase family. Mg(2+) serves as cofactor. In terms of tissue distribution, the FPS1L mRNA accumulates preferentially in inflorescences, whereas the FPS1S mRNA is predominantly expressed in roots and inflorescences.

The protein localises to the mitochondrion. It localises to the cytoplasm. It catalyses the reaction isopentenyl diphosphate + dimethylallyl diphosphate = (2E)-geranyl diphosphate + diphosphate. It carries out the reaction isopentenyl diphosphate + (2E)-geranyl diphosphate = (2E,6E)-farnesyl diphosphate + diphosphate. It participates in isoprenoid biosynthesis; farnesyl diphosphate biosynthesis; farnesyl diphosphate from geranyl diphosphate and isopentenyl diphosphate: step 1/1. It functions in the pathway isoprenoid biosynthesis; geranyl diphosphate biosynthesis; geranyl diphosphate from dimethylallyl diphosphate and isopentenyl diphosphate: step 1/1. Catalyzes the sequential condensation of isopentenyl pyrophosphate with the allylic pyrophosphates, dimethylallyl pyrophosphate, and then with the resultant geranylpyrophosphate to the ultimate product farnesyl pyrophosphate. The polypeptide is Farnesyl pyrophosphate synthase 1, mitochondrial (FPS1) (Arabidopsis thaliana (Mouse-ear cress)).